We begin with the raw amino-acid sequence, 265 residues long: Enolase-phosphatase E1 (265 aa).

Mg(2+) is bound by residues Asp18 and Glu20. Residues 144–145 and Lys188 each bind substrate; that span reads SS. Asp215 is a Mg(2+) binding site.

It belongs to the HAD-like hydrolase superfamily. MasA/MtnC family. As to quaternary structure, monomer. Requires Mg(2+) as cofactor.

It is found in the cytoplasm. The protein resides in the nucleus. The catalysed reaction is 5-methylsulfanyl-2,3-dioxopentyl phosphate + H2O = 1,2-dihydroxy-5-(methylsulfanyl)pent-1-en-3-one + phosphate. It functions in the pathway amino-acid biosynthesis; L-methionine biosynthesis via salvage pathway; L-methionine from S-methyl-5-thio-alpha-D-ribose 1-phosphate: step 3/6. Its pathway is amino-acid biosynthesis; L-methionine biosynthesis via salvage pathway; L-methionine from S-methyl-5-thio-alpha-D-ribose 1-phosphate: step 4/6. Bifunctional enzyme that catalyzes the enolization of 2,3-diketo-5-methylthiopentyl-1-phosphate (DK-MTP-1-P) into the intermediate 2-hydroxy-3-keto-5-methylthiopentenyl-1-phosphate (HK-MTPenyl-1-P), which is then dephosphorylated to form the acireductone 1,2-dihydroxy-3-keto-5-methylthiopentene (DHK-MTPene). The sequence is that of Enolase-phosphatase E1 from Candida albicans (strain SC5314 / ATCC MYA-2876) (Yeast).